The sequence spans 466 residues: UDP-N-acetylmuramoylalanine--D-glutamate ligase (466 aa).

127–133 contributes to the ATP binding site; the sequence is GSNGKST.

This sequence belongs to the MurCDEF family.

Its subcellular location is the cytoplasm. The catalysed reaction is UDP-N-acetyl-alpha-D-muramoyl-L-alanine + D-glutamate + ATP = UDP-N-acetyl-alpha-D-muramoyl-L-alanyl-D-glutamate + ADP + phosphate + H(+). Its pathway is cell wall biogenesis; peptidoglycan biosynthesis. Cell wall formation. Catalyzes the addition of glutamate to the nucleotide precursor UDP-N-acetylmuramoyl-L-alanine (UMA). The polypeptide is UDP-N-acetylmuramoylalanine--D-glutamate ligase (Ruegeria pomeroyi (strain ATCC 700808 / DSM 15171 / DSS-3) (Silicibacter pomeroyi)).